The following is a 263-amino-acid chain: Cytochrome c oxidase subunit 3 (263 aa).

The next 7 helical transmembrane spans lie at 9–29, 40–60, 84–104, 129–149, 161–181, 198–218, and 241–261; these read PFHM…AMIL, FNMN…IQWW, GMIL…WAFF, IQIP…ITWA, ALQG…LQMY, TFFV…TFLL, and AWYW…IYWW.

The protein belongs to the cytochrome c oxidase subunit 3 family. Component of the cytochrome c oxidase (complex IV, CIV), a multisubunit enzyme composed of a catalytic core of 3 subunits and several supernumerary subunits. The complex exists as a monomer or a dimer and forms supercomplexes (SCs) in the inner mitochondrial membrane with ubiquinol-cytochrome c oxidoreductase (cytochrome b-c1 complex, complex III, CIII).

The protein localises to the mitochondrion inner membrane. The enzyme catalyses 4 Fe(II)-[cytochrome c] + O2 + 8 H(+)(in) = 4 Fe(III)-[cytochrome c] + 2 H2O + 4 H(+)(out). In terms of biological role, component of the cytochrome c oxidase, the last enzyme in the mitochondrial electron transport chain which drives oxidative phosphorylation. The respiratory chain contains 3 multisubunit complexes succinate dehydrogenase (complex II, CII), ubiquinol-cytochrome c oxidoreductase (cytochrome b-c1 complex, complex III, CIII) and cytochrome c oxidase (complex IV, CIV), that cooperate to transfer electrons derived from NADH and succinate to molecular oxygen, creating an electrochemical gradient over the inner membrane that drives transmembrane transport and the ATP synthase. Cytochrome c oxidase is the component of the respiratory chain that catalyzes the reduction of oxygen to water. Electrons originating from reduced cytochrome c in the intermembrane space (IMS) are transferred via the dinuclear copper A center (CU(A)) of subunit 2 and heme A of subunit 1 to the active site in subunit 1, a binuclear center (BNC) formed by heme A3 and copper B (CU(B)). The BNC reduces molecular oxygen to 2 water molecules using 4 electrons from cytochrome c in the IMS and 4 protons from the mitochondrial matrix. This Locusta migratoria (Migratory locust) protein is Cytochrome c oxidase subunit 3 (COIII).